The primary structure comprises 194 residues: Anthranilate synthase component 2 (194 aa).

A Glutamine amidotransferase type-1 domain is found at 2-194; sequence KIFFIDNFDS…QSVGFLRELS (193 aa). 57–59 contacts L-glutamine; the sequence is GPG. Cys-84 functions as the Nucleophile; for GATase activity in the catalytic mechanism. L-glutamine-binding positions include Gln-88 and 134-135; that span reads SL. Catalysis depends on for GATase activity residues His-170 and Glu-172.

Heterotetramer consisting of two non-identical subunits: a beta subunit (TrpG) and a large alpha subunit (TrpE).

The enzyme catalyses chorismate + L-glutamine = anthranilate + pyruvate + L-glutamate + H(+). Its pathway is amino-acid biosynthesis; L-tryptophan biosynthesis; L-tryptophan from chorismate: step 1/5. Part of a heterotetrameric complex that catalyzes the two-step biosynthesis of anthranilate, an intermediate in the biosynthesis of L-tryptophan. In the first step, the glutamine-binding beta subunit (TrpG) of anthranilate synthase (AS) provides the glutamine amidotransferase activity which generates ammonia as a substrate that, along with chorismate, is used in the second step, catalyzed by the large alpha subunit of AS (TrpE) to produce anthranilate. In the absence of TrpG, TrpE can synthesize anthranilate directly from chorismate and high concentrations of ammonia. In Helicobacter pylori (strain J99 / ATCC 700824) (Campylobacter pylori J99), this protein is Anthranilate synthase component 2 (trpG).